The chain runs to 312 residues: Ribonuclease HIII (312 aa).

The 217-residue stretch at 95–311 (FNCIGSDEAG…REKAQKILKP (217 aa)) folds into the RNase H type-2 domain. Residues D101, E102, and D206 each contribute to the a divalent metal cation site.

Belongs to the RNase HII family. RnhC subfamily. Mn(2+) is required as a cofactor. The cofactor is Mg(2+).

Its subcellular location is the cytoplasm. The catalysed reaction is Endonucleolytic cleavage to 5'-phosphomonoester.. Its function is as follows. Endonuclease that specifically degrades the RNA of RNA-DNA hybrids. The chain is Ribonuclease HIII from Staphylococcus aureus (strain USA300).